We begin with the raw amino-acid sequence, 492 residues long: Prostaglandin E2 receptor EP4 subtype (492 aa).

The Extracellular portion of the chain corresponds to 1–19 (MSIPGTNASSSQASNPLNS). Asn-7 is a glycosylation site (N-linked (GlcNAc...) asparagine). Residues 20-43 (PVTIPAVMFIFGVVGNLVAIVVLC) form a helical membrane-spanning segment. Residues 44 to 55 (KSRKEQKETTFY) are Cytoplasmic-facing. The chain crosses the membrane as a helical span at residues 56–79 (TLVCGLAVTDLLGTLLVSPVTIAT). Over 80-96 (YLKGQWPGGHALCEYST) the chain is Extracellular. Cys-92 and Cys-170 form a disulfide bridge. The helical transmembrane segment at 97 to 115 (FILLFFGLSGLSIICAMSI) threads the bilayer. Residues 116-135 (ERYLAINHAYFYSHYVDKRL) lie on the Cytoplasmic side of the membrane. Residues 136 to 160 (AGLTLFAVYASNVLFCALPSMGLGS) form a helical membrane-spanning segment. At 161–184 (SRLQYPATWCFIDWTTNVTAHAAF) the chain is on the extracellular side. A helical transmembrane segment spans residues 185–211 (SYMYAGFSSFLILATVLCNVLVCGALL). Residues 212-273 (RMHRQFMRRT…RSFRRIAGAE (62 aa)) lie on the Cytoplasmic side of the membrane. Residues 274–301 (IQMVILLIATSLVVLICSIPLVVRVFVN) form a helical membrane-spanning segment. Residues 302–318 (QLYRPQLEPVIGKNPDL) lie on the Extracellular side of the membrane. The chain crosses the membrane as a helical span at residues 319 to 338 (QAIRIASVSPILDPWIYILL). Residues 339–492 (RKTVLSKAIE…ETLNLSEKCI (154 aa)) are Cytoplasmic-facing. The segment covering 361-374 (RRERSGPHCSDSRR) has biased composition (basic and acidic residues). Residues 361-383 (RRERSGPHCSDSRRTSSAVSGHS) form a disordered region. Phosphoserine is present on residues Ser-380, Ser-383, Ser-385, and Ser-388.

The protein belongs to the G-protein coupled receptor 1 family. Interacts with FEM1A. Phosphorylation mediates agonist-mediated desensitization by promoting cytoplasmic retention.

Its subcellular location is the cell membrane. In terms of biological role, receptor for prostaglandin E2 (PGE2). The activity of this receptor is mediated by G(s) proteins that stimulate adenylate cyclase. Has a relaxing effect on smooth muscle. May play an important role in regulating renal hemodynamics, intestinal epithelial transport, adrenal aldosterone secretion, and uterine function. The polypeptide is Prostaglandin E2 receptor EP4 subtype (PTGER4) (Bos taurus (Bovine)).